Consider the following 263-residue polypeptide: MKKIHPSAVIEEGAQLGDDVVVEAYAYVSKDAKIGNNVVIKQGARILSDTTIGDHSRVFSYAIVGDIPQDISYKEEQKSGVVIGKNATIREFATINSGTAKGDGFTRIGDNAFIMAYCHIAHDCLLGNNIILANNATLAGHVELGDFTVVGGLTPIHQFVKVGEGCMIAGASALSQDIVPFCLAEGNRASIRSLNLVGTRRRFDKDEVDRLSRAFKTLFRQGDLKENAKNLLENQESENVKKMCHFILETKRGIPVYRGKNNA.

It belongs to the transferase hexapeptide repeat family. LpxA subfamily. In terms of assembly, homotrimer.

Its subcellular location is the cytoplasm. It carries out the reaction a (3R)-hydroxyacyl-[ACP] + UDP-N-acetyl-alpha-D-glucosamine = a UDP-3-O-[(3R)-3-hydroxyacyl]-N-acetyl-alpha-D-glucosamine + holo-[ACP]. It participates in glycolipid biosynthesis; lipid IV(A) biosynthesis; lipid IV(A) from (3R)-3-hydroxytetradecanoyl-[acyl-carrier-protein] and UDP-N-acetyl-alpha-D-glucosamine: step 1/6. In terms of biological role, involved in the biosynthesis of lipid A, a phosphorylated glycolipid that anchors the lipopolysaccharide to the outer membrane of the cell. In Campylobacter jejuni (strain RM1221), this protein is Acyl-[acyl-carrier-protein]--UDP-N-acetylglucosamine O-acyltransferase.